A 258-amino-acid chain; its full sequence is Meiotic drive suppressor wtf20 (258 aa).

The tract at residues 1–71 is disordered; it reads MKNNYTSLKS…GPTEIANPNV (71 aa). A compositionally biased stretch (basic and acidic residues) spans 19–30; sequence KTDHEIDLEKGL. Helical transmembrane passes span 84–106, 121–140, and 196–216; these read IYFL…TAWV, FSVT…FYFY, and SASA…AETV.

Belongs to the WTF family. As to quaternary structure, homomer. Interacts with other proteins that exhibit high sequence similarity.

It localises to the spore membrane. Its subcellular location is the vacuole membrane. Functionally, acts as a suppressor component of the dual wtf meiotic drive system, and can suppress but not confer meiotic drive by compatible poisons. Wtf meiotic drive systems promote unequal transmission of alleles from the parental zygote to progeny spores by encoding a poison and an antidote from the same locus; the poison is trans-acting and forms toxic aggregates in all spores within an ascus, wherease the antidote is spore-specific and targets aggregates for degradation by the vacuole. Meiotic drive by wtf systems therefore lead to poisoning of all progeny that do not inherit the dual poison/antidote allele, or express a compatible antidote. The polypeptide is Meiotic drive suppressor wtf20 (Schizosaccharomyces pombe (strain 972 / ATCC 24843) (Fission yeast)).